Consider the following 234-residue polypeptide: Venom allergen 3 (234 aa).

Positions 1–22 are cleaved as a signal peptide; that stretch reads MELIVSILWLAITAENLANTLA. Cystine bridges form between Cys-26/Cys-41, Cys-31/Cys-125, Cys-52/Cys-118, and Cys-198/Cys-216. The 150-residue stretch at 69-218 folds into the SCP domain; it reads VNKHNELRQR…WTKHYLVCNY (150 aa). Residues 80-99 form a disordered region; it reads ASGKEMRGTNGPQPPAVKMP.

Belongs to the CRISP family. In terms of tissue distribution, expressed by the venom gland.

Its subcellular location is the secreted. In Solenopsis invicta (Red imported fire ant), this protein is Venom allergen 3.